The chain runs to 52 residues: Transmembrane protein ORF52 (52 aa).

The next 2 membrane-spanning stretches (helical) occupy residues 11-31 and 32-52; these read AFLG…EIIT and FMAL…GLFV.

The protein resides in the host membrane. The polypeptide is Transmembrane protein ORF52 (Acidianus filamentous virus 1 (isolate United States/Yellowstone) (AFV-1)).